The sequence spans 690 residues: Exonuclease GOR (690 aa).

Disordered regions lie at residues threonine 136–glycine 162 and glutamine 567–histidine 690. Positions alanine 585–serine 595 are enriched in polar residues. Residues lysine 605–arginine 614 are compositionally biased toward basic and acidic residues. The tract at residues glycine 612–leucine 626 is GOR14-1 epitope. The span at asparagine 631–serine 646 shows a compositional bias: low complexity. Positions proline 661–histidine 682 are enriched in pro residues.

This sequence belongs to the REXO1/REXO3 family.

Its subcellular location is the cytoplasm. It localises to the nucleus. The chain is Exonuclease GOR (REXO1L1) from Pan troglodytes (Chimpanzee).